The primary structure comprises 360 residues: MSKQILILPGDGIGPEIMAEAVKVLELANEKYSLGFELSHDVIGGAAIDKHGVPLADETLDRARAADAVLLGAVGGPKWDTIERDIRPERGLLKIRAQLGLFGNLRPAILYPQLADASSLKPEIAAGLDILIVRELTGGIYFGAPRGTRTLENGERQSYDTLPYSESEIRRIARVGFDMARVRGKKLCSVDKANVLASSQLWREVVEQVAKDYPDVELSHMYVDNAAMQLVRAPKQFDVIVTDNMFGDILSDEASMLTGSIGMLPSASLDANNKGMYEPCHGSAPDIAGKGIANPLATILSVSMMLRYSFNLHEAADAIEKAVSVVLDQGLRTGDIFSTGCTKVGTQEMGDAVVAALRNL.

76-89 (GPKWDTIERDIRPE) lines the NAD(+) pocket. Substrate-binding residues include Arg-96, Arg-106, Arg-134, and Asp-224. 3 residues coordinate Mg(2+): Asp-224, Asp-248, and Asp-252. 282–294 (GSAPDIAGKGIAN) lines the NAD(+) pocket.

Belongs to the isocitrate and isopropylmalate dehydrogenases family. LeuB type 1 subfamily. As to quaternary structure, homodimer. Mg(2+) serves as cofactor. Mn(2+) is required as a cofactor.

The protein localises to the cytoplasm. The enzyme catalyses (2R,3S)-3-isopropylmalate + NAD(+) = 4-methyl-2-oxopentanoate + CO2 + NADH. It functions in the pathway amino-acid biosynthesis; L-leucine biosynthesis; L-leucine from 3-methyl-2-oxobutanoate: step 3/4. In terms of biological role, catalyzes the oxidation of 3-carboxy-2-hydroxy-4-methylpentanoate (3-isopropylmalate) to 3-carboxy-4-methyl-2-oxopentanoate. The product decarboxylates to 4-methyl-2 oxopentanoate. This Pseudomonas fluorescens (strain Pf0-1) protein is 3-isopropylmalate dehydrogenase.